A 33-amino-acid chain; its full sequence is Trypsin inhibitor 1 (33 aa).

Intrachain disulfides connect Cys-1/Cys-17, Cys-8/Cys-21, and Cys-16/Cys-32.

Expressed in leaves and fruit flesh (at protein level).

In terms of biological role, inhibits trypsin (IC(50)=471 nM). The protein is Trypsin inhibitor 1 of Beta vulgaris subsp. vulgaris (Beet).